We begin with the raw amino-acid sequence, 330 residues long: Fructose-1,6-bisphosphatase class 1 (330 aa).

The Mg(2+) site is built by Glu84, Asp103, Leu105, and Asp106. Substrate-binding positions include Asp106–Ser109, Asn196, and Lys262. Glu268 lines the Mg(2+) pocket.

This sequence belongs to the FBPase class 1 family. In terms of assembly, homotetramer. The cofactor is Mg(2+).

It is found in the cytoplasm. It carries out the reaction beta-D-fructose 1,6-bisphosphate + H2O = beta-D-fructose 6-phosphate + phosphate. The protein operates within carbohydrate biosynthesis; gluconeogenesis. The chain is Fructose-1,6-bisphosphatase class 1 from Shewanella sp. (strain MR-7).